Here is a 148-residue protein sequence, read N- to C-terminus: Ubiquitin-conjugating enzyme E2 28 (148 aa).

A UBC core domain is found at 1-147 (MASKRILKEL…ARSWTQKYAM (147 aa)). C85 acts as the Glycyl thioester intermediate in catalysis.

Belongs to the ubiquitin-conjugating enzyme family. Interacts with SINAT5. In terms of tissue distribution, expressed in seeds, pistils, siliques, hypocotyls and leaves.

It carries out the reaction S-ubiquitinyl-[E1 ubiquitin-activating enzyme]-L-cysteine + [E2 ubiquitin-conjugating enzyme]-L-cysteine = [E1 ubiquitin-activating enzyme]-L-cysteine + S-ubiquitinyl-[E2 ubiquitin-conjugating enzyme]-L-cysteine.. Its pathway is protein modification; protein ubiquitination. Accepts the ubiquitin from the E1 complex and catalyzes its covalent attachment to other proteins. This is Ubiquitin-conjugating enzyme E2 28 from Arabidopsis thaliana (Mouse-ear cress).